A 500-amino-acid chain; its full sequence is Galactose/methyl galactoside import ATP-binding protein MglA (500 aa).

ABC transporter domains are found at residues Leu-8 to Asp-243 and Glu-257 to Leu-500. Gly-40–Ser-47 contacts ATP.

The protein belongs to the ABC transporter superfamily. Galactose/methyl galactoside importer (TC 3.A.1.2.3) family. The complex is composed of one ATP-binding protein (MglA), two transmembrane proteins (MglC) and a solute-binding protein (MglB).

The protein resides in the cell inner membrane. It catalyses the reaction D-galactose(out) + ATP + H2O = D-galactose(in) + ADP + phosphate + H(+). The catalysed reaction is methyl beta-D-galactoside(out) + ATP + H2O = methyl beta-D-galactoside(in) + ADP + phosphate + H(+). In terms of biological role, part of the ABC transporter complex MglABC involved in galactose/methyl galactoside import. Responsible for energy coupling to the transport system. The protein is Galactose/methyl galactoside import ATP-binding protein MglA of Fusobacterium nucleatum subsp. nucleatum (strain ATCC 25586 / DSM 15643 / BCRC 10681 / CIP 101130 / JCM 8532 / KCTC 2640 / LMG 13131 / VPI 4355).